Here is a 415-residue protein sequence, read N- to C-terminus: MGSLGAILKHPDDFYPLLKLKIAARHAEKQIPSEPHWAFCYSMLHKVSRSFGLVIQQLGPQLRDAVCIFYLVLRALDTVEDDTSISTEVKVPIVMAFHCHIYDNDWHFSCGTKEYKVLMDEFHHVSNAFLDLGSSYKEAIEDITMRMGAGMAKFICKEVETIDDYDEYCHYVAGLVGLGLSKLFHASGAEDLATDSLSNSMGLFLQKTNIIRDYLEDINEIPKSRMFWPRQIWSKYVDKLEDLKYEENSGKAVQCLNDMVTNALLHVEDCLKYMSDLRDPAIFRFCAIPQIMAIGTLALCYNNIQVFRGVVKMRRGLTAKVIDRTNTMSDVYGTFFDFSCMLKSKVDNNDPNATKTLSRLEAIQKICKNSGALTTKRKSYIIENESGYNSTLIIILFIILAILYAYLSSNLPNSL.

The next 2 helical transmembrane spans lie at alanine 281 to tyrosine 301 and leucine 392 to proline 412.

Belongs to the phytoene/squalene synthase family. Mg(2+) serves as cofactor. The cofactor is Mn(2+).

The protein localises to the endoplasmic reticulum membrane. It carries out the reaction 2 (2E,6E)-farnesyl diphosphate + NADH + H(+) = squalene + 2 diphosphate + NAD(+). The catalysed reaction is 2 (2E,6E)-farnesyl diphosphate + NADPH + H(+) = squalene + 2 diphosphate + NADP(+). Its pathway is terpene metabolism; lanosterol biosynthesis; lanosterol from farnesyl diphosphate: step 1/3. Component of the triterpene saponins (e.g. ginsenosides or panaxosides) and phytosterols biosynthetic pathways. Catalyzes the biosynthesis of squalene. In Panax ginseng (Korean ginseng), this protein is Squalene synthase 3.